A 186-amino-acid chain; its full sequence is Proline-rich protein 3 (186 aa).

Residues 1–97 are disordered; sequence MPKRKKQNQP…LGPRSSPYGR (97 aa). 2 stretches are compositionally biased toward pro residues: residues 33–44 and 67–79; these read MGPPSLLGPPPM and MIPP…PPPR. The segment at 153-181 adopts a C3H1-type zinc-finger fold; that stretch reads KSDRPVCRHFSKKGHCRYEDHCAFYHPGV.

This Rattus norvegicus (Rat) protein is Proline-rich protein 3 (Prr3).